The following is a 393-amino-acid chain: Na(+)/H(+) antiporter NhaA (393 aa).

Transmembrane regions (helical) follow at residues 23-43, 58-78, 96-116, 126-146, 155-175, 178-198, 201-221, 224-244, 265-285, 298-318, 334-354, and 367-387; these read AGGI…NSPF, LSLA…LVGL, MLPG…FAVL, GWAV…SLLG, VFLA…IAIF, AEIS…LFVM, MGVV…FFVF, GVHA…KPAP, VAFI…FKGL, ILLG…WLAI, LYGV…IGLL, and IGVL…LRAA.

Belongs to the NhaA Na(+)/H(+) (TC 2.A.33) antiporter family.

It is found in the cell inner membrane. It catalyses the reaction Na(+)(in) + 2 H(+)(out) = Na(+)(out) + 2 H(+)(in). Functionally, na(+)/H(+) antiporter that extrudes sodium in exchange for external protons. The protein is Na(+)/H(+) antiporter NhaA of Brucella suis (strain ATCC 23445 / NCTC 10510).